We begin with the raw amino-acid sequence, 403 residues long: Coiled-coil domain-containing glutamate-rich protein 1 (403 aa).

Positions 1-11 are enriched in basic and acidic residues; it reads MTQTVNEREDP. 5 disordered regions span residues 1–23, 51–70, 134–164, 202–241, and 261–350; these read MTQT…ASSI, IEYE…GSWF, RPPG…PPID, QQEK…VEED, and PALM…GEQR. The segment covering 137 to 157 has biased composition (basic residues); the sequence is GRKKRWGRRGRGLRRHPRRSF. Low complexity predominate over residues 209–220; it reads QQAALRAQQAQE. Positions 261–271 are enriched in polar residues; that stretch reads PALMQHNQSPT. Residues 275–346 show a composition bias toward acidic residues; the sequence is VEEEEKNVDD…YMLEETGLEE (72 aa). The stretch at 292 to 353 forms a coiled coil; it reads CDEKEESEEE…LEEGEQRAEE (62 aa).

As to expression, expressed in testis.

Its subcellular location is the nucleus. Regulator of histone epigenetic modifications and chromatin compaction into the sperm head, required for histone-to-protamine (HTP) transition. HTP is a key event in which somatic histones are first replaced by testis-specific histone variants, then transition proteins (TNPs) are incorporated into the spermatid nucleus, and finally protamines (PRMs) replace the TNPs to promote chromatin condensation. The polypeptide is Coiled-coil domain-containing glutamate-rich protein 1 (Ccer1) (Mus musculus (Mouse)).